The primary structure comprises 661 residues: MSNFSIISDYKPAGDQPKAIDEIIKGLNNKKRSQMLLGITGSGKTFTMANIIERTNRPTLIMAHNKTLAAQIYSEMKSIFPKNAVEYFVSYYDYYQPEAYIPKTDVFIEKDSSINEQIDLMRHSATRSLLERRDVIVVSSVSCIYGLGSPDLYYQMTVNLEPGKSYPRDKLLNDLVNLQYERNDIGFERGCFRVKGDNVDVFPSHYSDKAWRLSFFGNELEYIHEFDPLTGEKLVKLDKAIIYGNSHFVMPKETVNKAISEIEEELQKRIAFLKSQDKLLETQRINQRTQYDLEMLTETGSCKGVENYSRFFTGRKAGEPPPTLFEYLPKDALLFVDESHVSVPQIRAMYNGDRARKEVLVEHGFRLPSALDNRPLKFEEWDNFRPQTVFVSATPSLFELNETGGEVVELIIRPTGLLDPECIIKPATNQVEDLVGEIQSTIAKGFCVLVTTLTKKMAEDLTNYLQELKYKTSYLHSNIHTLERIEILRDLRQGTIDILVGINLLREGLDIPECGLVAILDADKEGFLRSEVSLIQTIGRAARNSEGRVILYADKMTKSIDKAISETMRRRTIQQEHNEKYGIIPKTINRTIHALAELEKVDSKLDKKQTHNLFENPAKLKAHIDKLRKEMLKAASNLEFEQAAKLRDQLKTLEEAALELS.

Residues 25–182 (KGLNNKKRSQ…NDLVNLQYER (158 aa)) form the Helicase ATP-binding domain. Residue 38 to 45 (GITGSGKT) coordinates ATP. The Beta-hairpin signature appears at 91-114 (YYDYYQPEAYIPKTDVFIEKDSSI). The Helicase C-terminal domain maps to 430–592 (QVEDLVGEIQ…IIPKTINRTI (163 aa)). Residues 621–656 (KAHIDKLRKEMLKAASNLEFEQAAKLRDQLKTLEEA) enclose the UVR domain.

It belongs to the UvrB family. As to quaternary structure, forms a heterotetramer with UvrA during the search for lesions. Interacts with UvrC in an incision complex.

It is found in the cytoplasm. The UvrABC repair system catalyzes the recognition and processing of DNA lesions. A damage recognition complex composed of 2 UvrA and 2 UvrB subunits scans DNA for abnormalities. Upon binding of the UvrA(2)B(2) complex to a putative damaged site, the DNA wraps around one UvrB monomer. DNA wrap is dependent on ATP binding by UvrB and probably causes local melting of the DNA helix, facilitating insertion of UvrB beta-hairpin between the DNA strands. Then UvrB probes one DNA strand for the presence of a lesion. If a lesion is found the UvrA subunits dissociate and the UvrB-DNA preincision complex is formed. This complex is subsequently bound by UvrC and the second UvrB is released. If no lesion is found, the DNA wraps around the other UvrB subunit that will check the other stand for damage. The sequence is that of UvrABC system protein B from Rickettsia bellii (strain RML369-C).